Consider the following 452-residue polypeptide: D-inositol 3-phosphate glycosyltransferase (452 aa).

His-25 contributes to the 1D-myo-inositol 3-phosphate binding site. Residues 31–32 and Gly-39 contribute to the UDP-N-acetyl-alpha-D-glucosamine site; that span reads QP. Residues 36 to 41, Lys-94, Tyr-127, Thr-151, and Arg-171 each bind 1D-myo-inositol 3-phosphate; that span reads DAGGMN. 3 residues coordinate UDP-N-acetyl-alpha-D-glucosamine: Arg-245, Lys-250, and Gln-309. 3 residues coordinate Mg(2+): Tyr-318, Arg-319, and Ser-321. Residues Glu-331 and Glu-339 each coordinate UDP-N-acetyl-alpha-D-glucosamine. Mg(2+) is bound at residue Thr-345.

This sequence belongs to the glycosyltransferase group 1 family. MshA subfamily. Homodimer.

It carries out the reaction 1D-myo-inositol 3-phosphate + UDP-N-acetyl-alpha-D-glucosamine = 1D-myo-inositol 2-acetamido-2-deoxy-alpha-D-glucopyranoside 3-phosphate + UDP + H(+). Catalyzes the transfer of a N-acetyl-glucosamine moiety to 1D-myo-inositol 3-phosphate to produce 1D-myo-inositol 2-acetamido-2-deoxy-glucopyranoside 3-phosphate in the mycothiol biosynthesis pathway. The chain is D-inositol 3-phosphate glycosyltransferase from Rhodococcus jostii (strain RHA1).